The following is a 220-amino-acid chain: 7-cyano-7-deazaguanine synthase (220 aa).

10-20 (FSGGQDSTTCL) is an ATP binding site. Zn(2+) contacts are provided by Cys186, Cys195, Cys198, and Cys201.

This sequence belongs to the QueC family. Homodimer. Zn(2+) is required as a cofactor.

The catalysed reaction is 7-carboxy-7-deazaguanine + NH4(+) + ATP = 7-cyano-7-deazaguanine + ADP + phosphate + H2O + H(+). It participates in purine metabolism; 7-cyano-7-deazaguanine biosynthesis. Catalyzes the ATP-dependent conversion of 7-carboxy-7-deazaguanine (CDG) to 7-cyano-7-deazaguanine (preQ(0)). The protein is 7-cyano-7-deazaguanine synthase of Bacillus cereus (strain G9842).